A 196-amino-acid chain; its full sequence is Proteasome subunit beta 1 (196 aa).

Residues 1-6 constitute a propeptide, removed in mature form; by autocatalysis; sequence MEELPA. Thr7 (nucleophile) is an active-site residue.

It belongs to the peptidase T1B family. As to quaternary structure, the 20S proteasome core is composed of 14 alpha and 14 beta subunits that assemble into four stacked heptameric rings, resulting in a barrel-shaped structure. The two inner rings, each composed of seven catalytic beta subunits, are sandwiched by two outer rings, each composed of seven alpha subunits. The catalytic chamber with the active sites is on the inside of the barrel. Has a gated structure, the ends of the cylinder being occluded by the N-termini of the alpha-subunits. Is capped at one or both ends by the proteasome regulatory ATPase, PAN.

The protein resides in the cytoplasm. The catalysed reaction is Cleavage of peptide bonds with very broad specificity.. The formation of the proteasomal ATPase PAN-20S proteasome complex, via the docking of the C-termini of PAN into the intersubunit pockets in the alpha-rings, triggers opening of the gate for substrate entry. Interconversion between the open-gate and close-gate conformations leads to a dynamic regulation of the 20S proteasome proteolysis activity. Its function is as follows. Component of the proteasome core, a large protease complex with broad specificity involved in protein degradation. This is Proteasome subunit beta 1 from Saccharolobus islandicus (strain Y.N.15.51 / Yellowstone #2) (Sulfolobus islandicus).